A 251-amino-acid chain; its full sequence is uncharacterized protein (251 aa).

The signal sequence occupies residues 1–18 (MRILIILSIILCSLSIRA).

It belongs to the MlaA family.

This is an uncharacterized protein from Rickettsia conorii (strain ATCC VR-613 / Malish 7).